The sequence spans 826 residues: Lon protease (826 aa).

A compositionally biased stretch (basic and acidic residues) spans 1 to 20 (MSEEELNNRDTESKQEHDEN). The interval 1–27 (MSEEELNNRDTESKQEHDENNSNFEAG) is disordered. The Lon N-terminal domain occupies 33 to 231 (LPVLPLREVI…KVHALLEKEL (199 aa)). Position 384-391 (384-391 (GPPGVGKT)) interacts with ATP. One can recognise a Lon proteolytic domain in the interval 620–801 (ENLVGMTTGL…SEALTFTLAE (182 aa)). Catalysis depends on residues Ser-707 and Lys-750.

It belongs to the peptidase S16 family. In terms of assembly, homohexamer. Organized in a ring with a central cavity.

It localises to the cytoplasm. It carries out the reaction Hydrolysis of proteins in presence of ATP.. ATP-dependent serine protease that mediates the selective degradation of mutant and abnormal proteins as well as certain short-lived regulatory proteins. Required for cellular homeostasis and for survival from DNA damage and developmental changes induced by stress. Degrades polypeptides processively to yield small peptide fragments that are 5 to 10 amino acids long. Binds to DNA in a double-stranded, site-specific manner. The chain is Lon protease from Neorickettsia sennetsu (strain ATCC VR-367 / Miyayama) (Ehrlichia sennetsu).